The sequence spans 213 residues: Phosphatidylserine decarboxylase proenzyme (213 aa).

The active-site Schiff-base intermediate with substrate; via pyruvic acid is the S182. S182 carries the pyruvic acid (Ser); by autocatalysis modification.

It belongs to the phosphatidylserine decarboxylase family. PSD-A subfamily. As to quaternary structure, heterodimer of a large membrane-associated beta subunit and a small pyruvoyl-containing alpha subunit. Pyruvate serves as cofactor. Is synthesized initially as an inactive proenzyme. Formation of the active enzyme involves a self-maturation process in which the active site pyruvoyl group is generated from an internal serine residue via an autocatalytic post-translational modification. Two non-identical subunits are generated from the proenzyme in this reaction, and the pyruvate is formed at the N-terminus of the alpha chain, which is derived from the carboxyl end of the proenzyme. The post-translation cleavage follows an unusual pathway, termed non-hydrolytic serinolysis, in which the side chain hydroxyl group of the serine supplies its oxygen atom to form the C-terminus of the beta chain, while the remainder of the serine residue undergoes an oxidative deamination to produce ammonia and the pyruvoyl prosthetic group on the alpha chain.

The protein localises to the cell membrane. It carries out the reaction a 1,2-diacyl-sn-glycero-3-phospho-L-serine + H(+) = a 1,2-diacyl-sn-glycero-3-phosphoethanolamine + CO2. It functions in the pathway phospholipid metabolism; phosphatidylethanolamine biosynthesis; phosphatidylethanolamine from CDP-diacylglycerol: step 2/2. In terms of biological role, catalyzes the formation of phosphatidylethanolamine (PtdEtn) from phosphatidylserine (PtdSer). This is Phosphatidylserine decarboxylase proenzyme from Chlorobium phaeobacteroides (strain BS1).